The sequence spans 412 residues: MRLSTAAALLTGFILAFSPAYDGCGPGRGYGKRRTPRKLTPLAYKQFSPNVAEKTLGASGRYEGKVTPSSERFKELTPNYNPDIIFKDEENTGADRMMTQRCKDKLNSLAISVMNLWPGVRLRVTEGWDEDGLHSEESLHYEGRAVDITTSDRDRNKYRMLARLAVEAGFDWVYYESKGHVHCSVKSEHSVAAKTGGCFPGRALVTMKDGSHRQIRDLQAGDLVLASEGSDGTGDLIYSEVLTFLDRRPITQKHFYVIRTEDGASVSLTAAHLLFMRVGNCSNRGEPKPGAVRTIFASDAQVGQCLLLGKLRKRFSQITHVGVREDQGLYPPLTAHGTVVVNDVLTSCYAAVNRQRLAHWAFAPLRLLYSWTGPDQVLKNGLHWYSQVLIGLGKLLLDSELFHPLALEATER.

A signal peptide spans 1-23 (MRLSTAAALLTGFILAFSPAYDG). Residue Cys-24 is the site of N-palmitoyl cysteine attachment. Residues Glu-89, Glu-90, Asp-95, Thr-125, Glu-126, Asp-129, and Asp-131 each coordinate Ca(2+). Zn(2+) contacts are provided by His-140, Asp-147, and His-182. The Cholesterol glycine ester moiety is linked to residue Gly-197.

This sequence belongs to the hedgehog family. Multimer. As to quaternary structure, interacts with BOC and CDON. Interacts with PTCH1. Interacts with glypican GPC3. Cholesterylation is required for N-product targeting to lipid rafts and multimerization. Post-translationally, the C-terminal domain displays an autoproteolysis activity and a cholesterol transferase activity. Both activities result in the cleavage of the full-length protein and covalent attachment of a cholesterol moiety to the C-terminal of the newly generated N-product. The N-product is the active species in both local and long-range signaling, whereas the C-product is degraded in the endoplasmic reticulum. In terms of processing, N-palmitoylation by HHAT of N-product is required for indian hedgehog protein N-product multimerization and full activity. Expressed exclusively in the notochord.

Its subcellular location is the cell membrane. The protein localises to the endoplasmic reticulum membrane. It is found in the golgi apparatus membrane. The protein resides in the secreted. The enzyme catalyses glycyl-L-cysteinyl-[protein] + cholesterol + H(+) = [protein]-C-terminal glycyl cholesterol ester + N-terminal L-cysteinyl-[protein]. In terms of biological role, signal involved in the early induction and patterning of anterodorsal ectoderm, nervous system and somites. It is involved in the regulation of endochondral skeleton formation, and the development of retinal pigment epithelium (RPE), photoreceptors and periocular tissues. The C-terminal part of the indian hedgehog protein precursor displays an autoproteolysis and a cholesterol transferase activity. Both activities result in the cleavage of the full-length protein into two parts followed by the covalent attachment of a cholesterol moiety to the C-terminal of the newly generated N-product. Both activities occur in the endoplasmic reticulum. Its function is as follows. The dually lipidated indian hedgehog protein N-product is a morphogen which is essential for a variety of patterning events during development. Binds to the patched (PTCH1) receptor, which functions in association with smoothened (SMO), to activate the transcription of target genes. In the notochord, induces somite patterning and muscle pioneer differentiation. The sequence is that of Indian hedgehog B protein (ihhb) from Danio rerio (Zebrafish).